The sequence spans 291 residues: F-box/kelch-repeat protein At5g38670 (291 aa).

The F-box domain maps to 5-51 (TNPNPSLPDDLILSCVARVSRLYYPALSLVSKSFRSLIASPELYKTR). 4 Kelch repeats span residues 46–91 (ELYK…VLDE), 92–140 (KIYV…RFDG), 142–187 (LHLV…WYTI), and 189–232 (KGDI…YGGK).

This is F-box/kelch-repeat protein At5g38670 from Arabidopsis thaliana (Mouse-ear cress).